The primary structure comprises 225 residues: NAD(P)H-quinone oxidoreductase subunit K, chloroplastic (225 aa).

[4Fe-4S] cluster is bound by residues Cys-43, Cys-44, Cys-108, and Cys-139.

This sequence belongs to the complex I 20 kDa subunit family. NDH is composed of at least 16 different subunits, 5 of which are encoded in the nucleus. [4Fe-4S] cluster serves as cofactor.

Its subcellular location is the plastid. The protein resides in the chloroplast thylakoid membrane. It catalyses the reaction a plastoquinone + NADH + (n+1) H(+)(in) = a plastoquinol + NAD(+) + n H(+)(out). The enzyme catalyses a plastoquinone + NADPH + (n+1) H(+)(in) = a plastoquinol + NADP(+) + n H(+)(out). NDH shuttles electrons from NAD(P)H:plastoquinone, via FMN and iron-sulfur (Fe-S) centers, to quinones in the photosynthetic chain and possibly in a chloroplast respiratory chain. The immediate electron acceptor for the enzyme in this species is believed to be plastoquinone. Couples the redox reaction to proton translocation, and thus conserves the redox energy in a proton gradient. The polypeptide is NAD(P)H-quinone oxidoreductase subunit K, chloroplastic (Lepidium virginicum (Virginia pepperweed)).